Here is a 189-residue protein sequence, read N- to C-terminus: Flavin prenyltransferase UbiX (189 aa).

FMN is bound by residues 11–13, serine 37, 88–91, and arginine 123; these read GAS and SMRT. Tyrosine 153 serves as a coordination point for dimethylallyl phosphate.

Belongs to the UbiX/PAD1 family.

The catalysed reaction is dimethylallyl phosphate + FMNH2 = prenylated FMNH2 + phosphate. Its function is as follows. Flavin prenyltransferase that catalyzes the synthesis of the prenylated FMN cofactor (prenyl-FMN) for 4-hydroxy-3-polyprenylbenzoic acid decarboxylase UbiD. The prenyltransferase is metal-independent and links a dimethylallyl moiety from dimethylallyl monophosphate (DMAP) to the flavin N5 and C6 atoms of FMN. The sequence is that of Flavin prenyltransferase UbiX from Neisseria meningitidis serogroup B (strain ATCC BAA-335 / MC58).